The primary structure comprises 463 residues: L-seryl-tRNA(Sec) selenium transferase (463 aa).

At Lys-295 the chain carries N6-(pyridoxal phosphate)lysine.

The protein belongs to the SelA family. In terms of assembly, homodecamer; pentamer of dimers. Binds only one seryl-tRNA(Sec) per dimer. The cofactor is pyridoxal 5'-phosphate.

It is found in the cytoplasm. It carries out the reaction L-seryl-tRNA(Sec) + selenophosphate + H(+) = L-selenocysteinyl-tRNA(Sec) + phosphate. It functions in the pathway aminoacyl-tRNA biosynthesis; selenocysteinyl-tRNA(Sec) biosynthesis; selenocysteinyl-tRNA(Sec) from L-seryl-tRNA(Sec) (bacterial route): step 1/1. In terms of biological role, converts seryl-tRNA(Sec) to selenocysteinyl-tRNA(Sec) required for selenoprotein biosynthesis. The protein is L-seryl-tRNA(Sec) selenium transferase of Shigella flexneri.